Consider the following 469-residue polypeptide: Chromosomal replication initiator protein DnaA (469 aa).

Residues 1–71 (MKEFWQTCVS…EALAAEWYQR (71 aa)) form a domain I, interacts with DnaA modulators region. Residues 71-131 (RPVQVTFELP…DAANIVYERS (61 aa)) form a domain II region. Residues 132–348 (RLNTDLTFEN…GALRKVLAYA (217 aa)) form a domain III, AAA+ region region. Residues glycine 176, glycine 178, lysine 179, and threonine 180 each contribute to the ATP site. Residues 349–469 (RFHGRDVLTV…LHVLEQTLKG (121 aa)) are domain IV, binds dsDNA.

Belongs to the DnaA family. In terms of assembly, oligomerizes as a right-handed, spiral filament on DNA at oriC.

The protein localises to the cytoplasm. Its function is as follows. Plays an essential role in the initiation and regulation of chromosomal replication. ATP-DnaA binds to the origin of replication (oriC) to initiate formation of the DNA replication initiation complex once per cell cycle. Binds the DnaA box (a 9 base pair repeat at the origin) and separates the double-stranded (ds)DNA. Forms a right-handed helical filament on oriC DNA; dsDNA binds to the exterior of the filament while single-stranded (ss)DNA is stabiized in the filament's interior. The ATP-DnaA-oriC complex binds and stabilizes one strand of the AT-rich DNA unwinding element (DUE), permitting loading of DNA polymerase. After initiation quickly degrades to an ADP-DnaA complex that is not apt for DNA replication. Binds acidic phospholipids. In Bordetella parapertussis (strain 12822 / ATCC BAA-587 / NCTC 13253), this protein is Chromosomal replication initiator protein DnaA.